Reading from the N-terminus, the 619-residue chain is Chaperone protein HscA homolog (619 aa).

It belongs to the heat shock protein 70 family.

Its function is as follows. Chaperone involved in the maturation of iron-sulfur cluster-containing proteins. Has a low intrinsic ATPase activity which is markedly stimulated by HscB. The sequence is that of Chaperone protein HscA homolog from Pseudomonas aeruginosa (strain UCBPP-PA14).